We begin with the raw amino-acid sequence, 357 residues long: MVSGGRVGGGEGEAGEAAEVAVAMVDNEEEVAQAQAPPAAAVAARELVVGYALTSKKAKSFLQPKLRGLARKKGILFVAIDQKRPLSDQGPFDIVLHKLTGREWQQLLEEYREEHPEVTVLDPPGAIEHLLNRQSMLQEVSELDLSDCHGRVGVPKQLFVNTDPSSIPAAVMRAGLSLPLVAKPLVAKSHELSLAYDPISLTKLEPPLVLQEFVNHGGVLFKVYIVGDAIRVVRRFSLPNVDVGDLSNNAGVFRFPRVSCASANADDADLDPHVAELPPRPLLEILARELRRRLGLRLFNIDMIREHGTRDRFYVIDMNYFPGYGKMPGYEHVFTDFLLSLVQKEYKRRPSYSSCEG.

Positions 56 and 98 each coordinate 1D-myo-inositol 1,3,4-trisphosphate. 2 residues coordinate ATP: arginine 133 and lysine 183. 1D-myo-inositol 1,3,4-trisphosphate-binding residues include histidine 190 and lysine 222. ATP contacts are provided by residues 211–222 (QEFVNHGGVLFK), serine 237, and serine 262. Mg(2+)-binding residues include aspartate 302, aspartate 317, and asparagine 319. 1D-myo-inositol 1,3,4-trisphosphate is bound at residue asparagine 319.

It belongs to the ITPK1 family. In terms of assembly, monomer. Mg(2+) is required as a cofactor.

The catalysed reaction is 1D-myo-inositol 3,4,5,6-tetrakisphosphate + ATP = 1D-myo-inositol 1,3,4,5,6-pentakisphosphate + ADP + H(+). It catalyses the reaction 1D-myo-inositol 1,3,4-trisphosphate + ATP = 1D-myo-inositol 1,3,4,5-tetrakisphosphate + ADP + H(+). It carries out the reaction 1D-myo-inositol 1,3,4-trisphosphate + ATP = 1D-myo-inositol 1,3,4,6-tetrakisphosphate + ADP + H(+). In terms of biological role, kinase that can phosphorylate various inositol polyphosphate such as Ins(3,4,5,6)P4 or Ins(1,3,4)P3 and participates in phytic acid biosynthesis in developing seeds. Phytic acid is the primary storage form of phosphorus in cereal grains and other plant seeds. This is Inositol-tetrakisphosphate 1-kinase 3 (ITPK3) from Oryza sativa subsp. indica (Rice).